Here is a 155-residue protein sequence, read N- to C-terminus: 6,7-dimethyl-8-ribityllumazine synthase (155 aa).

5-amino-6-(D-ribitylamino)uracil is bound by residues F23, 57–59 (AFE), and 80–82 (AVI). (2S)-2-hydroxy-3-oxobutyl phosphate is bound at residue 85–86 (AT). Residue H88 is the Proton donor of the active site. 5-amino-6-(D-ribitylamino)uracil is bound at residue Y113. R127 is a binding site for (2S)-2-hydroxy-3-oxobutyl phosphate.

This sequence belongs to the DMRL synthase family.

The enzyme catalyses (2S)-2-hydroxy-3-oxobutyl phosphate + 5-amino-6-(D-ribitylamino)uracil = 6,7-dimethyl-8-(1-D-ribityl)lumazine + phosphate + 2 H2O + H(+). The protein operates within cofactor biosynthesis; riboflavin biosynthesis; riboflavin from 2-hydroxy-3-oxobutyl phosphate and 5-amino-6-(D-ribitylamino)uracil: step 1/2. In terms of biological role, catalyzes the formation of 6,7-dimethyl-8-ribityllumazine by condensation of 5-amino-6-(D-ribitylamino)uracil with 3,4-dihydroxy-2-butanone 4-phosphate. This is the penultimate step in the biosynthesis of riboflavin. The polypeptide is 6,7-dimethyl-8-ribityllumazine synthase (Moorella thermoacetica (strain ATCC 39073 / JCM 9320)).